A 144-amino-acid polypeptide reads, in one-letter code: Large ribosomal subunit protein eL27 (144 aa).

The 38-residue stretch at 6–43 (IKPGRLVILLNGKYAGRKAVVIKTFDDATASKSRPYGH) folds into the KOW domain.

The protein belongs to the eukaryotic ribosomal protein eL27 family.

The chain is Large ribosomal subunit protein eL27 (rpl27) from Dictyostelium discoideum (Social amoeba).